An 860-amino-acid chain; its full sequence is Leucine--tRNA ligase (860 aa).

The short motif at 73–83 (VLQPIGWDAFG) is the 'HIGH' region element. A 'KMSKS' region motif is present at residues 650–654 (SPADM). Asp653 lines the ATP pocket.

Belongs to the class-I aminoacyl-tRNA synthetase family.

Its subcellular location is the cytoplasm. The catalysed reaction is tRNA(Leu) + L-leucine + ATP = L-leucyl-tRNA(Leu) + AMP + diphosphate. The protein is Leucine--tRNA ligase of Shigella flexneri.